The primary structure comprises 382 residues: Homoserine O-acetyltransferase (382 aa).

The AB hydrolase-1 domain occupies 50-360 (NAVLICHALT…DKGHDAFLLD (311 aa)). S155 acts as the Nucleophile in catalysis. A substrate-binding site is contributed by R225. Catalysis depends on residues D321 and H354. A substrate-binding site is contributed by D355.

The protein belongs to the AB hydrolase superfamily. MetX family. As to quaternary structure, homodimer.

Its subcellular location is the cytoplasm. The enzyme catalyses L-homoserine + acetyl-CoA = O-acetyl-L-homoserine + CoA. The protein operates within amino-acid biosynthesis; L-methionine biosynthesis via de novo pathway; O-acetyl-L-homoserine from L-homoserine: step 1/1. Functionally, transfers an acetyl group from acetyl-CoA to L-homoserine, forming acetyl-L-homoserine. This is Homoserine O-acetyltransferase from Caulobacter vibrioides (strain ATCC 19089 / CIP 103742 / CB 15) (Caulobacter crescentus).